The primary structure comprises 428 residues: CinA-like protein (428 aa).

It belongs to the CinA family.

The protein is CinA-like protein of Endomicrobium trichonymphae.